The primary structure comprises 39 residues: Photosystem II reaction center protein X (39 aa).

A helical membrane pass occupies residues 11 to 31; that stretch reads SLLWGAIVVVIPLSAALLFIS.

The protein belongs to the PsbX family. Type 1 subfamily. PSII is composed of 1 copy each of membrane proteins PsbA, PsbB, PsbC, PsbD, PsbE, PsbF, PsbH, PsbI, PsbJ, PsbK, PsbL, PsbM, PsbT, PsbX, PsbY, PsbZ, Psb30/Ycf12, at least 3 peripheral proteins of the oxygen-evolving complex and a large number of cofactors. It forms dimeric complexes.

Its subcellular location is the plastid. The protein localises to the cyanelle thylakoid membrane. Functionally, involved in the binding and/or turnover of quinones at the Q(B) site of photosystem II (PSII). PSII is a light-driven water plastoquinone oxidoreductase, using light energy to abstract electrons from H(2)O, generating a proton gradient subsequently used for ATP formation. This is Photosystem II reaction center protein X from Cyanophora paradoxa.